Reading from the N-terminus, the 65-residue chain is MPKLKTHSASKKRFRVTATGKIKRGQAWRNHRLISKSRKAKKHHRLGAYVSAAQEATIKKLIPYK.

This sequence belongs to the bacterial ribosomal protein bL35 family.

In Ruminiclostridium cellulolyticum (strain ATCC 35319 / DSM 5812 / JCM 6584 / H10) (Clostridium cellulolyticum), this protein is Large ribosomal subunit protein bL35.